The sequence spans 175 residues: Transcriptional activatory protein BadR (175 aa).

An HTH marR-type domain is found at 20–156 (ANRLFFRLYQ…TLHYLLKILD (137 aa)).

Its function is as follows. Transcriptional activator of genes for the anaerobic degradation of benzoate. The protein is Transcriptional activatory protein BadR (badR) of Rhodopseudomonas palustris (strain ATCC BAA-98 / CGA009).